The primary structure comprises 193 residues: Probable chemoreceptor glutamine deamidase CheD 1 (193 aa).

Residues 1 to 26 (MPHTPPAYPAASADHRPPSSPPAEPA) form a disordered region.

The protein belongs to the CheD family.

The enzyme catalyses L-glutaminyl-[protein] + H2O = L-glutamyl-[protein] + NH4(+). Functionally, probably deamidates glutamine residues to glutamate on methyl-accepting chemotaxis receptors (MCPs), playing an important role in chemotaxis. The chain is Probable chemoreceptor glutamine deamidase CheD 1 from Chromobacterium violaceum (strain ATCC 12472 / DSM 30191 / JCM 1249 / CCUG 213 / NBRC 12614 / NCIMB 9131 / NCTC 9757 / MK).